Reading from the N-terminus, the 295-residue chain is Cyclin-G1 (295 aa).

The protein belongs to the cyclin family. Cyclin G subfamily. High levels in skeletal muscle, ovary, kidney and colon.

It localises to the nucleus. May play a role in growth regulation. Is associated with G2/M phase arrest in response to DNA damage. May be an intermediate by which p53 mediates its role as an inhibitor of cellular proliferation. This chain is Cyclin-G1 (CCNG1), found in Homo sapiens (Human).